We begin with the raw amino-acid sequence, 64 residues long: Relaxin (64 aa).

Cystine bridges form between C11–C51, C23–C64, and C50–C55.

Belongs to the insulin family. In terms of assembly, heterodimer of a B chain and an A chain linked by two disulfide bonds.

The protein localises to the secreted. This Leucoraja erinaceus (Little skate) protein is Relaxin.